Consider the following 162-residue polypeptide: MPKKKNKLPTEIVLTYKVKHNHDLKNLPDEFIKISQRAIDIIWENINWKEKVVKHRYKIGKKKYKYYTTTRLIPKIPKDNDFKRELRNRLLEGWEFASHYVDGAIKTAYSAIESWKSNYLNVNRKKNKPIFKRPFVRVKTTLMKYDRKNGIIRITIKPRKSI.

This is an uncharacterized protein from Methanocaldococcus jannaschii (strain ATCC 43067 / DSM 2661 / JAL-1 / JCM 10045 / NBRC 100440) (Methanococcus jannaschii).